A 356-amino-acid polypeptide reads, in one-letter code: Phosphoserine aminotransferase (356 aa).

An L-glutamate-binding site is contributed by Arg41. Residues 75–76 (AT), Trp100, Thr147, Asp166, and Gln189 each bind pyridoxal 5'-phosphate. Residue Lys190 is modified to N6-(pyridoxal phosphate)lysine. 227–228 (NT) contacts pyridoxal 5'-phosphate.

It belongs to the class-V pyridoxal-phosphate-dependent aminotransferase family. SerC subfamily. In terms of assembly, homodimer. Pyridoxal 5'-phosphate serves as cofactor.

The protein localises to the cytoplasm. It catalyses the reaction O-phospho-L-serine + 2-oxoglutarate = 3-phosphooxypyruvate + L-glutamate. The catalysed reaction is 4-(phosphooxy)-L-threonine + 2-oxoglutarate = (R)-3-hydroxy-2-oxo-4-phosphooxybutanoate + L-glutamate. It functions in the pathway amino-acid biosynthesis; L-serine biosynthesis; L-serine from 3-phospho-D-glycerate: step 2/3. Functionally, catalyzes the reversible conversion of 3-phosphohydroxypyruvate to phosphoserine and of 3-hydroxy-2-oxo-4-phosphonooxybutanoate to phosphohydroxythreonine. This is Phosphoserine aminotransferase from Exiguobacterium sp. (strain ATCC BAA-1283 / AT1b).